A 218-amino-acid chain; its full sequence is Superoxide dismutase [Mn] 2, mitochondrial (218 aa).

The N-terminal 24 residues, 1–24, are a transit peptide targeting the mitochondrion; it reads MLQSTARTASKLVQPVAGVLAVRS. The Mn(2+) site is built by H50, H98, D179, and H183.

This sequence belongs to the iron/manganese superoxide dismutase family. In terms of assembly, homotetramer. Requires Mn(2+) as cofactor. As to expression, expressed in pharynx and rectum. Upon thermal stress, expressed in vulva, body wall muscles and hypodermis.

The protein resides in the mitochondrion. The enzyme catalyses 2 superoxide + 2 H(+) = H2O2 + O2. Its function is as follows. Destroys superoxide anion radicals which are normally produced within the cells and which are toxic to biological systems. In Caenorhabditis elegans, this protein is Superoxide dismutase [Mn] 2, mitochondrial (sod-3).